A 124-amino-acid chain; its full sequence is Small ribosomal subunit protein uS12 (124 aa).

The interval 1-32 (MPTINQLVRKGRRDKTAKVKTAALKGSPQRRG) is disordered. Position 89 is a 3-methylthioaspartic acid (Asp-89). Residues 104–124 (TQGVKGRKQARSRYGAKKEKS) are disordered. Positions 108 to 118 (KGRKQARSRYG) are enriched in basic residues.

This sequence belongs to the universal ribosomal protein uS12 family. Part of the 30S ribosomal subunit. Contacts proteins S8 and S17. May interact with IF1 in the 30S initiation complex.

In terms of biological role, with S4 and S5 plays an important role in translational accuracy. Functionally, interacts with and stabilizes bases of the 16S rRNA that are involved in tRNA selection in the A site and with the mRNA backbone. Located at the interface of the 30S and 50S subunits, it traverses the body of the 30S subunit contacting proteins on the other side and probably holding the rRNA structure together. The combined cluster of proteins S8, S12 and S17 appears to hold together the shoulder and platform of the 30S subunit. This chain is Small ribosomal subunit protein uS12, found in Rhodococcus erythropolis (strain PR4 / NBRC 100887).